We begin with the raw amino-acid sequence, 130 residues long: MSSKATKTVKSKFDIINNQLRDDLIDFRSGDTIRVDVKIKEGDKFRIQSFEGLVIKTQGSGITYSVVVRKMSNGVFVERTFPLHSPIIDSVTLIKRGKVRRSRIYYIRKLSGKAARIKEIMPTKQAKEIK.

It belongs to the bacterial ribosomal protein bL19 family.

Its function is as follows. This protein is located at the 30S-50S ribosomal subunit interface and may play a role in the structure and function of the aminoacyl-tRNA binding site. The polypeptide is Large ribosomal subunit protein bL19 (Mycoplasma capricolum subsp. capricolum (strain California kid / ATCC 27343 / NCTC 10154)).